A 95-amino-acid polypeptide reads, in one-letter code: Putative per-hexamer repeat protein 4 (95 aa).

This Mus musculus (Mouse) protein is Putative per-hexamer repeat protein 4 (Phxr4).